Reading from the N-terminus, the 106-residue chain is Glycine/glutamate-rich protein sgp1 (106 aa).

Residues 1–20 (MKYSLIFILTLACLIASSLA) form the signal peptide. The disordered stretch occupies residues 20-66 (ARPEGEEKPADDAAGDKKEEGAEGDKTAAGGDEGFTGGDGKNAGGAG). The span at 22–45 (PEGEEKPADDAAGDKKEEGAEGDK) shows a compositional bias: basic and acidic residues. Residues 50–66 (GDEGFTGGDGKNAGGAG) are compositionally biased toward gly residues.

Its subcellular location is the secreted. This is Glycine/glutamate-rich protein sgp1 (sgp1) from Glossina morsitans morsitans (Savannah tsetse fly).